The chain runs to 1002 residues: E3 ubiquitin-protein ligase BRE1B (1002 aa).

Positions 1–32 are disordered; sequence MSGLSNKRAAGDGGSGPPEKKLNREEKTTTTL. The segment covering 18–28 has biased composition (basic and acidic residues); it reads PEKKLNREEKT. N6-acetyllysine is present on lysine 20. The residue at position 42 (serine 42) is a Phosphoserine. Positions 55–91 form a coiled coil; that stretch reads KNKKLAERLEQRQACEDELRERIEKLEKRQATDDATL. Residues 120 to 148 are disordered; that stretch reads SSGTEVPGCQEGLTRDVIPRTDPGTSDLR. 2 coiled-coil regions span residues 190–378 and 438–526; these read KAAV…LRSL and LQKK…ASGS. Residues lysine 356 and lysine 518 each carry the N6-acetyllysine modification. 2 disordered regions span residues 520–562 and 579–652; these read RAQA…PDSK and KKEE…ESEL. Glycyl lysine isopeptide (Lys-Gly) (interchain with G-Cter in SUMO2) cross-links involve residues lysine 579 and lysine 580. A phosphoserine mark is found at serine 585 and serine 586. Composition is skewed to basic and acidic residues over residues 603–620 and 634–652; these read RGRE…EREG and RADR…ESEL. A coiled-coil region spans residues 628-947; that stretch reads AASTLSRADR…EEIKEYKARL (320 aa). Residues 949–988 form an RING-type zinc finger; the sequence is CPCCNTRKKDAVLTKCFHVFCFECVRGRYEARQRKCPKCN.

Belongs to the BRE1 family. Component of the RNF20/40 complex (also known as BRE1 complex) probably composed of 2 copies of RNF20/BRE1A and 2 copies of RNF40/BRE1B. Interacts with UBE2E1/UBCH6. Interacts with RB1 and WAC. May interact with STX1A. Ubiquitously expressed. Expressed in brain, testis, heart, liver and kidney. Weakly expressed in lung, spleen and skeletal muscle (at protein level).

The protein localises to the nucleus. It catalyses the reaction S-ubiquitinyl-[E2 ubiquitin-conjugating enzyme]-L-cysteine + [acceptor protein]-L-lysine = [E2 ubiquitin-conjugating enzyme]-L-cysteine + N(6)-ubiquitinyl-[acceptor protein]-L-lysine.. Its pathway is protein modification; protein ubiquitination. Functionally, component of the RNF20/40 E3 ubiquitin-protein ligase complex that mediates monoubiquitination of 'Lys-120' of histone H2B (H2BK120ub1). H2BK120ub1 gives a specific tag for epigenetic transcriptional activation and is also prerequisite for histone H3 'Lys-4' and 'Lys-79' methylation (H3K4me and H3K79me, respectively). It thereby plays a central role in histone code and gene regulation. The RNF20/40 complex forms a H2B ubiquitin ligase complex in cooperation with the E2 enzyme UBE2A or UBE2B; reports about the cooperation with UBE2E1/UBCH are contradictory. Required for transcriptional activation of Hox genes. The chain is E3 ubiquitin-protein ligase BRE1B (Rnf40) from Rattus norvegicus (Rat).